Reading from the N-terminus, the 398-residue chain is Phospholipase C (398 aa).

Positions 1–26 (MKALKKVSNILCVLGLCTLMGGTSYA) are cleaved as a signal peptide. Zn(2+) contacts are provided by Trp-27, His-37, Asp-82, His-94, His-152, Asp-156, His-162, His-174, and Glu-178. The 250-residue stretch at 27–276 (WDGKKDGTGT…NEVSNGNTGD (250 aa)) folds into the Zn-dependent PLC domain. Residues 273–281 (NTGDNDSLT) form a linker region. The region spanning 282–398 (NEFNIVLKTA…TGNETYYINK (117 aa)) is the PLAT domain. Residues Gly-297, Thr-298, Asp-299, Asp-319, Asn-320, Gly-322, Asn-323, Asp-324, and Asp-363 each contribute to the Ca(2+) site.

The protein belongs to the bacterial zinc-metallophospholipase C family. Requires Ca(2+) as cofactor. The cofactor is Zn(2+).

It localises to the secreted. It catalyses the reaction a 1,2-diacyl-sn-glycero-3-phosphocholine + H2O = phosphocholine + a 1,2-diacyl-sn-glycerol + H(+). Functionally, bacterial hemolysins are exotoxins that attack blood cell membranes and cause cell rupture. Binds to eukaryotic membranes where it hydrolyzes phosphatidylcholine. This enzyme has 10-fold less activity towards sphingomyelin than its C.perfringens counterpart, is approximately 100-fold less hemolytic against mouse erythrocytes and at least 100-fold less toxic in mice. This is Phospholipase C (plc) from Paraclostridium bifermentans (Clostridium bifermentans).